A 270-amino-acid polypeptide reads, in one-letter code: Phosphatidate cytidylyltransferase (270 aa).

8 helical membrane-spanning segments follow: residues 17–37, 55–75, 81–101, 104–124, 129–149, 170–190, 193–213, and 248–268; these read FVVL…AILI, FFYV…FEEP, ILFI…SQVF, VAAF…FLPI, GAAN…FAYF, EGVI…RLVV, LLSV…TVAI, and IDGL…LEGV.

Belongs to the CDS family.

The protein localises to the cell membrane. The enzyme catalyses a 1,2-diacyl-sn-glycero-3-phosphate + CTP + H(+) = a CDP-1,2-diacyl-sn-glycerol + diphosphate. It functions in the pathway phospholipid metabolism; CDP-diacylglycerol biosynthesis; CDP-diacylglycerol from sn-glycerol 3-phosphate: step 3/3. This chain is Phosphatidate cytidylyltransferase (cdsA), found in Thermotoga maritima (strain ATCC 43589 / DSM 3109 / JCM 10099 / NBRC 100826 / MSB8).